Consider the following 365-residue polypeptide: G-protein coupled receptor 68 (365 aa).

At 1-12 the chain is on the extracellular side; the sequence is MGNITTENSSLS. 2 N-linked (GlcNAc...) asparagine glycosylation sites follow: Asn3 and Asn8. A helical membrane pass occupies residues 13–49; the sequence is CPIDHTIHQTLAPVVYVTVLVVGFPANCLSLYFGYLQ. Cystine bridges form between Cys13/Cys258 and Cys94/Cys172. The Cytoplasmic segment spans residues 50–53; the sequence is IKAR. The chain crosses the membrane as a helical span at residues 54–84; the sequence is NELGVYLCNLTIADLFYICSLPFWLQYVLQH. Residues 85 to 89 lie on the Extracellular side of the membrane; sequence DDWSH. Residues 90-125 form a helical membrane-spanning segment; the sequence is GDLSCQVCGILLYENIYISVGFLCCISIDRYLAVAH. The Cytoplasmic portion of the chain corresponds to 126–133; it reads PFRFHQFR. Residues 134–160 form a helical membrane-spanning segment; it reads TLKAAVGVSVLIWAKELLTSIYFLNHK. Residues 161-176 are Extracellular-facing; it reads EVIEDEDQHRVCFEHY. The segment at 161–176 is extracellular loop 2 (ECL2); that stretch reads EVIEDEDQHRVCFEHY. A helical transmembrane segment spans residues 177–214; it reads PIQAWQRSINYYRFLVGFLFPICLLLASYQGILRAVRR. Residues 215 to 218 lie on the Cytoplasmic side of the membrane; that stretch reads SHGT. Residues 219 to 254 traverse the membrane as a helical segment; that stretch reads QKSRKDQIQRLVLSTVVIFLACFLPYHVLLLVRSLW. Residues 255-260 lie on the Extracellular side of the membrane; the sequence is ERNCEF. A helical membrane pass occupies residues 261–289; the sequence is AKSIFNVYHFSLLLTSFNCVADPVLYCFV. Residues 290–365 lie on the Cytoplasmic side of the membrane; it reads SETTHRDLAR…VGGPSTVGLA (76 aa).

The protein belongs to the G-protein coupled receptor 1 family. In terms of tissue distribution, expressed in the lung, testis, heart, brain, spleen, thymus, brown fat, small intestine, colon, peripheral blood leukocytes, macrophages, stomach, ovary and white fat but not in the liver, kidney, and skeletal muscle. Expression in the prostate is weak but detectable. Specifically expressed in endothelial cells of small-diameter resistance arteries.

Its subcellular location is the cell membrane. Its activity is regulated as follows. Activated by a network of residues that connects an extracellular-facing cavity to Glu-149, a conserved charged residue buried in the transmembrane core of the receptor. Protonation likely drives conformational changes in extracellular loop 2 (ECL2), which stabilizes movement of transmembrane 3 (TM3) and a series of rearrangements that connect the extracellular-facing cavity to Glu-149, a residue only conserved in proton-sensing G-protein coupled receptors. Activated in an allosteric manner by divalent metal ions at the extracellular surface following the order: Cd(2+) &gt; Co(2+) &gt; Ni(2+) &gt; Zn(2+) &gt; Fe(2+) &gt; Ca(2+) &gt; Mg(2+). Activated by ogerin (ZINC67740571), a selective GPR68 positive allosteric modulator. Inhibited by small molecule GPR68-I, decreasing inflammation in models of colitis. Proton-sensing G-protein coupled receptor activated by extracellular pH, which is required to monitor pH changes and generate adaptive reactions. The receptor is almost silent at pH 7.8 but fully activated at pH 6.8. Ligand binding causes a conformation change that triggers signaling via guanine nucleotide-binding proteins (G proteins) and modulates the activity of downstream effectors, such as phospholipase C. GPR68 is mainly coupled to G(q) G proteins and mediates production of diacylglycerol (DAG) and inositol 1,4,5-trisphosphate (IP3). Acts as a key mechanosensor of fluid shear stress and membrane stretch. Expressed in endothelial cells of small-diameter resistance arteries, where it mediates flow-induced dilation in response to shear stress. May represents an osteoblastic pH sensor regulating cell-mediated responses to acidosis in bone. Acts as a regulator of calcium-sensing receptor CASR in a seesaw manner: GPR68-mediated signaling inhibits CASR signaling in response to protons, while CASR inhibits GPR68 in presence of extracellular calcium. Also functions as a metastasis suppressor gene in prostate cancer. This is G-protein coupled receptor 68 from Mus musculus (Mouse).